The following is a 255-amino-acid chain: Hydroxyethylthiazole kinase (255 aa).

Position 38 (methionine 38) interacts with substrate. The ATP site is built by arginine 114 and threonine 160. Glycine 187 lines the substrate pocket.

This sequence belongs to the Thz kinase family. Mg(2+) is required as a cofactor.

It catalyses the reaction 5-(2-hydroxyethyl)-4-methylthiazole + ATP = 4-methyl-5-(2-phosphooxyethyl)-thiazole + ADP + H(+). The protein operates within cofactor biosynthesis; thiamine diphosphate biosynthesis; 4-methyl-5-(2-phosphoethyl)-thiazole from 5-(2-hydroxyethyl)-4-methylthiazole: step 1/1. Functionally, catalyzes the phosphorylation of the hydroxyl group of 4-methyl-5-beta-hydroxyethylthiazole (THZ). This Lysinibacillus sphaericus (strain C3-41) protein is Hydroxyethylthiazole kinase.